The following is a 260-amino-acid chain: Putative ABC transporter ATP-binding protein (260 aa).

Positions 4-243 (ISMKNVTLKK…QVLENFYESP (240 aa)) constitute an ABC transporter domain. Residue 36 to 43 (GLNGSGKT) coordinates ATP.

This sequence belongs to the ABC transporter superfamily.

The protein is Putative ABC transporter ATP-binding protein (abcX) of Streptococcus mutans serotype c (strain ATCC 700610 / UA159).